The sequence spans 312 residues: Phosphate system positive regulatory protein PHO4 (312 aa).

Positions 1–31 (MGRTTSEGIHGFVDDLEPKSSILDKVGDFIT) are interaction with PHO80. A disordered region spans residues 35–71 (KRHDGREDFNEQNDELNSQENHNSSENGNENENEQDS). Residues 49–62 (ELNSQENHNSSENG) are compositionally biased toward low complexity. A 9aaTAD motif is present at residues 75 to 83 (DDLDRAFEL). A transcription activation domain region spans residues 75-99 (DDLDRAFELVEGMDMDWMMPSHAHH). A phosphoserine; by PHO85 mark is found at Ser-100, Ser-114, Ser-128, and Ser-152. Composition is skewed to polar residues over residues 138–154 (TTSA…SSPY) and 196–210 (PSNS…TAKT). A disordered region spans residues 138-259 (TTSANKVTKN…DKRESHKHAE (122 aa)). The Nuclear localization signal signature appears at 140–166 (SANKVTKNKSNSSPYLNKRRGKPGPDS). The interaction with PHO80 stretch occupies residues 156–200 (NKRRGKPGPDSATSLFELPDSVIPTPKPKPKPKQYPKVILPSNST). The segment at 201-218 (RRVSPVTAKTSSSAEGVV) is interaction with PHO2. Residues 203 to 227 (VSPVTAKTSSSAEGVVVASESPVIA) are involved in oligomerization. Residue Ser-204 is modified to Phosphoserine. Residues 211 to 235 (SSSAEGVVVASESPVIAPHGSSHSR) show a composition bias toward low complexity. Ser-223 bears the Phosphoserine; by PHO85 mark. Residues Ser-242 and Ser-243 each carry the phosphoserine modification. The span at 248-259 (DDDKRESHKHAE) shows a compositional bias: basic and acidic residues. Positions 250 to 306 (DKRESHKHAEQARRNRLAVALHELASLIPAEWKQQNVSAAPSKATTVEAACRYIRHL) constitute a bHLH domain.

As to quaternary structure, binds DNA as a homodimer. Interacts with transcription factor PHO2 and binds cooperatively to PHO5 UAS. Interacts with the cyclin-CDK PHO80-PHO85 and the CDK inhibitor (CKI) PHO81. Post-translationally, phosphorylated by the cyclin-CDK PHO80-PHO85 at five residues under high-phosphate conditions, preventing PHO4 from activating the structural PHO genes. Phosphorylation of Ser-114 and Ser-128 promotes nuclear export. Phosphorylation of Ser-152 decreases nuclear import. Phosphorylation of Ser-223 decreases the binding affinity for PHO2.

Its subcellular location is the cytoplasm. The protein resides in the nucleus. Functionally, transcriptional activator that regulates the expression of repressible phosphatase under phosphate starvation conditions. Binds to the upstream activating sequence (UAS) of several phosphatase encoding PHO genes. Inhibited by the cyclin-CDK PHO80-PHO85 under high-phosphate conditions. The protein is Phosphate system positive regulatory protein PHO4 (PHO4) of Saccharomyces cerevisiae (strain ATCC 204508 / S288c) (Baker's yeast).